The sequence spans 189 residues: Cyclin-dependent kinase inhibitor 5 (189 aa).

A compositionally biased stretch (polar residues) spans 73–93 (KQQKQQLIPSVNQCQTKNPRA). The segment at 73 to 107 (KQQKQQLIPSVNQCQTKNPRASSGPAKKLEPDTTT) is disordered.

Belongs to the CDI family. ICK/KRP subfamily. As to quaternary structure, interacts with CYCD4-1. Does not interact with CDKA-1. Expressed in flowers and at lower levels in roots and leaves.

The protein resides in the nucleus. It localises to the nucleoplasm. Inhibits CYCD2-1/CDKA-1 complex kinase activity without interaction with the complex. In Arabidopsis thaliana (Mouse-ear cress), this protein is Cyclin-dependent kinase inhibitor 5 (KRP5).